A 556-amino-acid polypeptide reads, in one-letter code: Hydroxylamine reductase (556 aa).

Positions 5, 8, 17, and 23 each coordinate [4Fe-4S] cluster. His-249, Glu-273, Cys-317, Cys-409, Cys-437, Cys-462, Glu-497, and Lys-499 together coordinate hybrid [4Fe-2O-2S] cluster. Cys-409 is subject to Cysteine persulfide.

It belongs to the HCP family. Requires [4Fe-4S] cluster as cofactor. It depends on hybrid [4Fe-2O-2S] cluster as a cofactor.

The protein resides in the cytoplasm. The enzyme catalyses A + NH4(+) + H2O = hydroxylamine + AH2 + H(+). Functionally, catalyzes the reduction of hydroxylamine to form NH(3) and H(2)O. The sequence is that of Hydroxylamine reductase from Kosmotoga olearia (strain ATCC BAA-1733 / DSM 21960 / TBF 19.5.1).